The chain runs to 664 residues: Phosphomethylpyrimidine synthase (664 aa).

Substrate is bound by residues asparagine 235, methionine 264, tyrosine 293, histidine 329, 349-351, 390-393, and glutamate 429; these read SRG and DGMR. Histidine 433 serves as a coordination point for Zn(2+). Tyrosine 456 is a binding site for substrate. Residue histidine 497 participates in Zn(2+) binding. 3 residues coordinate [4Fe-4S] cluster: cysteine 577, cysteine 580, and cysteine 585.

The protein belongs to the ThiC family. In terms of assembly, homodimer. [4Fe-4S] cluster serves as cofactor.

The enzyme catalyses 5-amino-1-(5-phospho-beta-D-ribosyl)imidazole + S-adenosyl-L-methionine = 4-amino-2-methyl-5-(phosphooxymethyl)pyrimidine + CO + 5'-deoxyadenosine + formate + L-methionine + 3 H(+). It functions in the pathway cofactor biosynthesis; thiamine diphosphate biosynthesis. Its function is as follows. Catalyzes the synthesis of the hydroxymethylpyrimidine phosphate (HMP-P) moiety of thiamine from aminoimidazole ribotide (AIR) in a radical S-adenosyl-L-methionine (SAM)-dependent reaction. This chain is Phosphomethylpyrimidine synthase, found in Shewanella amazonensis (strain ATCC BAA-1098 / SB2B).